Consider the following 243-residue polypeptide: Cell division protein ZipA (243 aa).

Topologically, residues 1-4 (MSDV) are periplasmic. Residues 5-25 (TLLRIGIAIVGILFVAAVFFF) form a helical membrane-spanning segment. The Cytoplasmic segment spans residues 26–243 (STPKTSAHRV…VPPLIKNSRW (218 aa)). The tract at residues 32–89 (AHRVRTKKEEPPRERREPMLSTEVDNSPHQSVDEVPASVPQQQVNPEATKPGEIELGK) is disordered. Residues 38-49 (KKEEPPRERREP) are compositionally biased toward basic and acidic residues.

The protein belongs to the ZipA family. As to quaternary structure, interacts with FtsZ via their C-terminal domains.

The protein resides in the cell inner membrane. Functionally, essential cell division protein that stabilizes the FtsZ protofilaments by cross-linking them and that serves as a cytoplasmic membrane anchor for the Z ring. Also required for the recruitment to the septal ring of downstream cell division proteins. This chain is Cell division protein ZipA, found in Xylella fastidiosa (strain Temecula1 / ATCC 700964).